The primary structure comprises 236 residues: tRNA (guanine-N(1)-)-methyltransferase (236 aa).

S-adenosyl-L-methionine contacts are provided by residues Gly-116 and 136 to 141 (LGDFVL).

It belongs to the RNA methyltransferase TrmD family. As to quaternary structure, homodimer.

Its subcellular location is the cytoplasm. It carries out the reaction guanosine(37) in tRNA + S-adenosyl-L-methionine = N(1)-methylguanosine(37) in tRNA + S-adenosyl-L-homocysteine + H(+). Specifically methylates guanosine-37 in various tRNAs. The protein is tRNA (guanine-N(1)-)-methyltransferase of Thiobacillus denitrificans (strain ATCC 25259 / T1).